A 431-amino-acid polypeptide reads, in one-letter code: Serine--tRNA ligase (431 aa).

237–239 (TAE) contacts L-serine. An ATP-binding site is contributed by 268-270 (RSE). Glutamate 291 is an L-serine binding site. An ATP-binding site is contributed by 355–358 (EISS). Serine 390 lines the L-serine pocket.

It belongs to the class-II aminoacyl-tRNA synthetase family. Type-1 seryl-tRNA synthetase subfamily. As to quaternary structure, homodimer. The tRNA molecule binds across the dimer.

It is found in the cytoplasm. The enzyme catalyses tRNA(Ser) + L-serine + ATP = L-seryl-tRNA(Ser) + AMP + diphosphate + H(+). The catalysed reaction is tRNA(Sec) + L-serine + ATP = L-seryl-tRNA(Sec) + AMP + diphosphate + H(+). The protein operates within aminoacyl-tRNA biosynthesis; selenocysteinyl-tRNA(Sec) biosynthesis; L-seryl-tRNA(Sec) from L-serine and tRNA(Sec): step 1/1. Its function is as follows. Catalyzes the attachment of serine to tRNA(Ser). Is also able to aminoacylate tRNA(Sec) with serine, to form the misacylated tRNA L-seryl-tRNA(Sec), which will be further converted into selenocysteinyl-tRNA(Sec). The sequence is that of Serine--tRNA ligase from Neisseria gonorrhoeae (strain NCCP11945).